The primary structure comprises 238 residues: Fatty acid metabolism regulator protein (238 aa).

An HTH gntR-type domain is found at 6-74 (KGPASFAEKY…HGKPTRVNNF (69 aa)). Positions 34 to 53 (ERELSELIGVTRTTLREVLQ) form a DNA-binding region, H-T-H motif.

Homodimer.

It localises to the cytoplasm. Its function is as follows. Multifunctional regulator of fatty acid metabolism. The protein is Fatty acid metabolism regulator protein of Shewanella baltica (strain OS223).